Reading from the N-terminus, the 901-residue chain is Protein translocase subunit SecA (901 aa).

Residues Gln-87, 105 to 109 (GEGKT), and Asp-512 each bind ATP. 4 residues coordinate Zn(2+): Cys-885, Cys-887, Cys-896, and His-897.

It belongs to the SecA family. Monomer and homodimer. Part of the essential Sec protein translocation apparatus which comprises SecA, SecYEG and auxiliary proteins SecDF-YajC and YidC. Zn(2+) is required as a cofactor.

It localises to the cell inner membrane. The protein resides in the cytoplasm. It carries out the reaction ATP + H2O + cellular proteinSide 1 = ADP + phosphate + cellular proteinSide 2.. Part of the Sec protein translocase complex. Interacts with the SecYEG preprotein conducting channel. Has a central role in coupling the hydrolysis of ATP to the transfer of proteins into and across the cell membrane, serving both as a receptor for the preprotein-SecB complex and as an ATP-driven molecular motor driving the stepwise translocation of polypeptide chains across the membrane. This Salmonella enteritidis PT4 (strain P125109) protein is Protein translocase subunit SecA.